The following is a 344-amino-acid chain: 5,10-methenyltetrahydromethanopterin hydrogenase (344 aa).

This sequence belongs to the HMD family.

It carries out the reaction 5,10-methenyl-5,6,7,8-tetrahydromethanopterin + H2 = 5,10-methylenetetrahydromethanopterin + H(+). Its pathway is one-carbon metabolism; methanogenesis from CO(2); 5,10-methylene-5,6,7,8-tetrahydromethanopterin from 5,10-methenyl-5,6,7,8-tetrahydromethanopterin (hydrogen route): step 1/1. Functionally, catalyzes the reversible reduction of methenyl-H(4)MPT(+) to methylene-H(4)MPT. The chain is 5,10-methenyltetrahydromethanopterin hydrogenase (hmd) from Methanothermobacter thermautotrophicus (Methanobacterium thermoformicicum).